A 666-amino-acid chain; its full sequence is Fructose-1,6-bisphosphatase class 3 (666 aa).

This sequence belongs to the FBPase class 3 family. Mn(2+) serves as cofactor.

The catalysed reaction is beta-D-fructose 1,6-bisphosphate + H2O = beta-D-fructose 6-phosphate + phosphate. It functions in the pathway carbohydrate biosynthesis; gluconeogenesis. The protein is Fructose-1,6-bisphosphatase class 3 of Phocaeicola vulgatus (strain ATCC 8482 / DSM 1447 / JCM 5826 / CCUG 4940 / NBRC 14291 / NCTC 11154) (Bacteroides vulgatus).